The sequence spans 601 residues: RNA-binding protein MEX3B (601 aa).

Disordered regions lie at residues Met-1–Arg-39 and Gly-90–Thr-109. Phosphoserine is present on Ser-4. Positions Gly-13–Glu-33 are enriched in gly residues. 2 consecutive KH domains span residues Asp-98–Ile-159 and Gln-192–Ile-253. Disordered stretches follow at residues Leu-284–Tyr-332 and Thr-344–Ser-448. Ser-320 carries the post-translational modification Phosphoserine. 2 stretches are compositionally biased toward low complexity: residues Ser-320–Ser-331 and Asn-362–Gly-371. Over residues Asp-395–Thr-404 the composition is skewed to pro residues. Positions Ala-420–Phe-442 are enriched in low complexity. The residue at position 494 (Ser-494) is a Phosphoserine. The tract at residues Leu-514–Gly-546 is disordered. Low complexity predominate over residues Ser-519–Ser-540. The segment at Cys-550 to His-590 adopts an RING-type zinc-finger fold.

Post-translationally, phosphorylation at Ser-494 creates a docking site for 14-3-3, which stabilizes the protein and modulates its ability to bind RNA.

It is found in the cytoplasm. It localises to the nucleus. Its subcellular location is the P-body. The protein localises to the cytoplasmic granule. Functionally, RNA-binding protein. May be involved in post-transcriptional regulatory mechanisms. The chain is RNA-binding protein MEX3B (Mex3b) from Mus musculus (Mouse).